The sequence spans 470 residues: Cysteine--tRNA ligase (470 aa).

A Zn(2+)-binding site is contributed by C27. Positions 29 to 39 (PTVYNYIHIGN) match the 'HIGH' region motif. 3 residues coordinate Zn(2+): C207, H232, and E236. The 'KMSKS' region motif lies at 264–268 (KMSKS). Residue K267 coordinates ATP.

The protein belongs to the class-I aminoacyl-tRNA synthetase family. As to quaternary structure, monomer. Zn(2+) serves as cofactor.

It localises to the cytoplasm. The catalysed reaction is tRNA(Cys) + L-cysteine + ATP = L-cysteinyl-tRNA(Cys) + AMP + diphosphate. This Lachnoclostridium phytofermentans (strain ATCC 700394 / DSM 18823 / ISDg) (Clostridium phytofermentans) protein is Cysteine--tRNA ligase.